Consider the following 266-residue polypeptide: 3-methyl-2-oxobutanoate hydroxymethyltransferase (266 aa).

The Mg(2+) site is built by Asp45 and Asp84. 3-methyl-2-oxobutanoate-binding positions include 45–46 (DS), Asp84, and Lys112. Glu114 serves as a coordination point for Mg(2+). The active-site Proton acceptor is the Glu181.

This sequence belongs to the PanB family. As to quaternary structure, homodecamer; pentamer of dimers. It depends on Mg(2+) as a cofactor.

The protein resides in the cytoplasm. It catalyses the reaction 3-methyl-2-oxobutanoate + (6R)-5,10-methylene-5,6,7,8-tetrahydrofolate + H2O = 2-dehydropantoate + (6S)-5,6,7,8-tetrahydrofolate. Its pathway is cofactor biosynthesis; (R)-pantothenate biosynthesis; (R)-pantoate from 3-methyl-2-oxobutanoate: step 1/2. Its function is as follows. Catalyzes the reversible reaction in which hydroxymethyl group from 5,10-methylenetetrahydrofolate is transferred onto alpha-ketoisovalerate to form ketopantoate. In Pseudomonas fluorescens (strain SBW25), this protein is 3-methyl-2-oxobutanoate hydroxymethyltransferase.